Consider the following 472-residue polypeptide: MDRRNQITSVIREYLGRNPVPKEYEVLKKQTLKLSKIINFNKDTFFFLIKKNKYTFFKDLNVSDEEIQERIDEYFTKQRRARRLGNLLAIVELQKLLVSSFTKTLGVLTTKALEYYPSNIRLDYSFMEKIADNILDSYNVVKPSEEVKGRHKVSDLVLHVNKIMEEYLRRHSNSCICYGSYSLHLLNKKIEYGDIDILQTNARIFLINIAFLIRFITGRCVVLLKVPFLKNYVVIHDENLNHVMDSFNIKQSTMDKIPKIMIDNMYIVDPCIQLLNTIKMFSQIDRLEDIHTKFDKLSIRLGTLLEYTRYRYSILLDSESILDVKYKIDIQNRKIILDFKKYNLNYIKCYFFLDEDELKKLIRKTPKTDDYIDLEAVTNSEYMILNKTMYTYFSNTTLLRSKDELHPITINALTSHALLYHVITKKFYDDLLGDLIRSLMIVEKVPVYEIIPRDKKRGKHTIIDIEKDVVFH.

Catalysis depends on residues D194 and D196.

The protein belongs to the poxviridae poly(A) polymerase catalytic subunit family. As to quaternary structure, heterodimer of a large (catalytic) subunit and a small (regulatory) subunit.

The enzyme catalyses RNA(n) + ATP = RNA(n)-3'-adenine ribonucleotide + diphosphate. Polymerase that creates the 3'-poly(A) tail of mRNA's. This chain is Poly(A) polymerase catalytic subunit (PAPL), found in Serinus (CNPV).